Consider the following 682-residue polypeptide: Glucan endo-1,3-beta-glucosidase A1 (682 aa).

The signal sequence occupies residues 1-38 (MKPSHFTEKRFMKKVLGLFLVVVMLASVGVLPTSKVQA). Positions 391 to 682 (YTFIGNPNAP…VDYVRVYKEQ (292 aa)) constitute a GH16 domain. Glutamate 552 serves as the catalytic Nucleophile. The active-site Proton donor is the glutamate 557.

This sequence belongs to the glycosyl hydrolase 16 family.

The protein localises to the secreted. It catalyses the reaction Hydrolysis of (1-&gt;3)-beta-D-glucosidic linkages in (1-&gt;3)-beta-D-glucans.. Lysis of cellular walls containing beta-1,3-glucans. Implicated in the defense against fungal pathogens. This chain is Glucan endo-1,3-beta-glucosidase A1 (glcA), found in Niallia circulans (Bacillus circulans).